We begin with the raw amino-acid sequence, 62 residues long: Mu-conotoxin Lt5d (62 aa).

The N-terminal stretch at 1–22 (MRCLPVFIILLLLIPSAPSVDA) is a signal peptide. A propeptide spanning residues 23-48 (QPTTKDDVPLASLHDNAKRALQMFWN) is cleaved from the precursor.

It belongs to the conotoxin T superfamily. Contains 2 disulfide bonds that can be either 'C1-C3, C2-C4' or 'C1-C4, C2-C3', since these disulfide connectivities have been observed for conotoxins with cysteine framework V (for examples, see AC P0DQQ7 and AC P81755). As to expression, expressed by the venom duct.

The protein localises to the secreted. Its function is as follows. Mu-conotoxins block voltage-gated sodium channels (Nav). This toxin inhibits tetrodotoxin(TTX)-sensitive sodium channels, but does not affect TTX-resistant sodium channels. Reduces the amplitude of currents without changing the activation and inactivation kinetics of currents. In Conus litteratus (Lettered cone), this protein is Mu-conotoxin Lt5d.